The following is a 316-amino-acid chain: Protein C4 (316 aa).

This sequence belongs to the poxviridae OPG031 protein family.

Its subcellular location is the host cytoplasm. The protein resides in the host nucleus. Its function is as follows. Plays a role in the inhibition of host NF-kappa-B activation. Mechanistically, blocks the subunit p65/RELA translocation into the host nucleus. The protein is Protein C4 (OPG031) of Vaccinia virus (strain Western Reserve) (VACV).